We begin with the raw amino-acid sequence, 346 residues long: Histone H1.8 (346 aa).

Composition is skewed to low complexity over residues 1 to 23 (MAPG…SSRS) and 38 to 48 (PGGPSHSSLPV). Disordered regions lie at residues 1–50 (MAPG…PVGR) and 121–346 (ATGS…RAEA). Residues 51–129 (RHPPVLRMVL…GATGSFKLVP (79 aa)) form the H15 domain. Residues 128–137 (VPKHKKKIQP) show a composition bias toward basic residues. A compositionally biased stretch (basic and acidic residues) spans 148–167 (RAGEAKGKGPKKPSEAKEDP). The short motif at 164-179 (KEDPPNVGKVKKAAKR) is the Nuclear localization signal element. The span at 172-182 (KVKKAAKRPAK) shows a compositional bias: basic residues. 2 stretches are compositionally biased toward basic and acidic residues: residues 205–225 (KDTR…DKAM) and 251–262 (EAYRKTKAESKS). The segment covering 278 to 288 (TKKKVVAKAKA) has biased composition (basic residues). The segment covering 298 to 309 (KAAAPAKGSGSK) has biased composition (low complexity). Residues 334–346 (ASSSKVSSQRAEA) show a composition bias toward polar residues.

Belongs to the histone H1/H5 family. As to expression, oocyte-specific.

It localises to the cytoplasm. The protein localises to the nucleus. The protein resides in the chromosome. In terms of biological role, may play a key role in the control of gene expression during oogenesis and early embryogenesis, presumably through the perturbation of chromatin structure. Essential for meiotic maturation of germinal vesicle-stage oocytes. The somatic type linker histone H1c is rapidly replaced by H1oo in a donor nucleus transplanted into an oocyte. The greater mobility of H1oo as compared to H1c may contribute to this rapid replacement and increased instability of the embryonic chromatin structure. The rapid replacement of H1c with H1oo may play an important role in nuclear remodeling. The sequence is that of Histone H1.8 from Homo sapiens (Human).